Consider the following 106-residue polypeptide: Large ribosomal subunit protein uL23 (106 aa).

This sequence belongs to the universal ribosomal protein uL23 family. Part of the 50S ribosomal subunit. Contacts protein L29, and trigger factor when it is bound to the ribosome.

One of the early assembly proteins it binds 23S rRNA. One of the proteins that surrounds the polypeptide exit tunnel on the outside of the ribosome. Forms the main docking site for trigger factor binding to the ribosome. The protein is Large ribosomal subunit protein uL23 of Neisseria gonorrhoeae (strain ATCC 700825 / FA 1090).